Here is a 632-residue protein sequence, read N- to C-terminus: tRNA uridine 5-carboxymethylaminomethyl modification enzyme MnmG (632 aa).

FAD contacts are provided by residues 15–20 (GAGHAG), I127, and S182. Residue 276-290 (GPRYCPSIEDKIVRF) coordinates NAD(+). Q373 provides a ligand contact to FAD.

It belongs to the MnmG family. In terms of assembly, homodimer. Heterotetramer of two MnmE and two MnmG subunits. It depends on FAD as a cofactor.

The protein localises to the cytoplasm. Functionally, NAD-binding protein involved in the addition of a carboxymethylaminomethyl (cmnm) group at the wobble position (U34) of certain tRNAs, forming tRNA-cmnm(5)s(2)U34. The polypeptide is tRNA uridine 5-carboxymethylaminomethyl modification enzyme MnmG (Streptococcus pyogenes serotype M12 (strain MGAS2096)).